An 859-amino-acid polypeptide reads, in one-letter code: Linoleate 9S-lipoxygenase B (859 aa).

A PLAT domain is found at 34–158 (INIGASVVDG…RYKSDRIFFA (125 aa)). Positions 161-859 (AYLPSETPQP…GKGIPNSVSI (699 aa)) constitute a Lipoxygenase domain. The segment at 213–246 (EYARPILGGSSEYPYPRRGRTGREPTKADPNCES) is disordered. The segment covering 233 to 244 (TGREPTKADPNC) has biased composition (basic and acidic residues). Residues His-521, His-526, His-711, and Ile-859 each coordinate Fe cation.

Belongs to the lipoxygenase family. Monomer. It depends on Fe cation as a cofactor. Fruit specific.

The protein localises to the cytoplasm. It carries out the reaction (9Z,12Z)-octadecadienoate + O2 = (9S)-hydroperoxy-(10E,12Z)-octadecadienoate. It participates in lipid metabolism; oxylipin biosynthesis. Functionally, plant lipoxygenase may be involved in a number of diverse aspects of plant physiology including growth and development, pest resistance, and senescence or responses to wounding. It catalyzes the hydroperoxidation of lipids containing a cis,cis-1,4-pentadiene structure. This Solanum lycopersicum (Tomato) protein is Linoleate 9S-lipoxygenase B (LOX1.2).